A 296-amino-acid chain; its full sequence is Maltose/maltodextrin transport system permease protein MalG (296 aa).

Residues 1-12 (MAMVQPKSQKLR) are Cytoplasmic-facing. The helical transmembrane segment at 13–35 (LLITHLGLLIFIAAIMFPLLMVI) threads the bilayer. The Periplasmic segment spans residues 36–88 (AISLREGNFATGSLIPDKISWEHWRLALGFSVEHADGRVTPPPFPVLLWLWNS). The ABC transmembrane type-1 domain occupies 85-281 (LWNSVKIAGI…IPITLVFLLA (197 aa)). Residues 89–111 (VKIAGITAIGIVALSTTCAYAFA) traverse the membrane as a helical segment. At 112–123 (RMRFPGKATLLK) the chain is on the cytoplasmic side. The chain crosses the membrane as a helical span at residues 124 to 143 (GMLIFQMFPAVLSLVALYAL). Over 144-152 (FDRLGQYIP) the chain is Periplasmic. Residues 153-175 (FIGLNTHGGVIFAYLGGIALHVW) traverse the membrane as a helical segment. Topologically, residues 176-204 (TIKGYFETIDSSLEEAAALDGATPWQAFR) are cytoplasmic. A helical transmembrane segment spans residues 205–227 (LVLLPLSVPILAVVFILSFIAAI). Residues 228–257 (TEVPVASLLLRDVDSYTLAVGMQQYLNPQN) lie on the Periplasmic side of the membrane. Residues 258 to 280 (YLWGDFAAAAVLSAIPITLVFLL) traverse the membrane as a helical segment. The Cytoplasmic portion of the chain corresponds to 281-296 (AQRWLVNGLTAGGVKG).

Belongs to the binding-protein-dependent transport system permease family. MalFG subfamily. As to quaternary structure, the complex is composed of two ATP-binding proteins (MalK), two transmembrane proteins (MalG and MalF) and a solute-binding protein (MalE).

It is found in the cell inner membrane. In terms of biological role, part of the ABC transporter complex MalEFGK involved in maltose/maltodextrin import. Probably responsible for the translocation of the substrate across the membrane. The protein is Maltose/maltodextrin transport system permease protein MalG (malG) of Salmonella typhimurium (strain LT2 / SGSC1412 / ATCC 700720).